We begin with the raw amino-acid sequence, 359 residues long: 5-formaminoimidazole-4-carboxamide-1-(beta)-D-ribofuranosyl 5'-monophosphate synthetase (359 aa).

5-amino-1-(5-phospho-beta-D-ribosyl)imidazole-4-carboxamide contacts are provided by H27 and S94. Positions 116-340 (RRLLRWESER…FGEIVTMGRR (225 aa)) constitute an ATP-grasp domain. ATP contacts are provided by residues 146–208 (PEDI…TNFC) and E230. Position 258 (N258) interacts with 5-amino-1-(5-phospho-beta-D-ribosyl)imidazole-4-carboxamide. Mg(2+) is bound by residues Q297 and E310.

This sequence belongs to the phosphohexose mutase family. Mg(2+) serves as cofactor. Requires Mn(2+) as cofactor.

It carries out the reaction 5-amino-1-(5-phospho-beta-D-ribosyl)imidazole-4-carboxamide + formate + ATP = 5-formamido-1-(5-phospho-D-ribosyl)imidazole-4-carboxamide + ADP + phosphate. It functions in the pathway purine metabolism; IMP biosynthesis via de novo pathway; 5-formamido-1-(5-phospho-D-ribosyl)imidazole-4-carboxamide from 5-amino-1-(5-phospho-D-ribosyl)imidazole-4-carboxamide (formate route): step 1/1. Functionally, catalyzes the ATP- and formate-dependent formylation of 5-aminoimidazole-4-carboxamide-1-beta-d-ribofuranosyl 5'-monophosphate (AICAR) to 5-formaminoimidazole-4-carboxamide-1-beta-d-ribofuranosyl 5'-monophosphate (FAICAR) in the absence of folates. The polypeptide is 5-formaminoimidazole-4-carboxamide-1-(beta)-D-ribofuranosyl 5'-monophosphate synthetase (Methanopyrus kandleri (strain AV19 / DSM 6324 / JCM 9639 / NBRC 100938)).